Here is a 951-residue protein sequence, read N- to C-terminus: Serine/threonine-protein kinase ATG1 (951 aa).

Positions 22-327 constitute a Protein kinase domain; the sequence is FTINEEIGKG…FPEYFAHPVV (306 aa). ATP is bound by residues 28–36 and Lys51; that span reads IGKGSFATV. The Proton acceptor role is filled by Asp165. 4 disordered regions span residues 343–375, 387–458, 514–573, and 924–951; these read IITPSRSPEASVARHPSLRERQRENPTPKPVET, EQAP…YDEQ, HIPK…SSPS, and HQSMPPPSSPRHSHSGGTTPTIANTPPH. Composition is skewed to basic and acidic residues over residues 359 to 368 and 432 to 442; these read SLRERQRENP and PRQRDRTERHY. Polar residues-rich tracts occupy residues 547–573 and 939–951; these read AQGNTRPDTSSARNSYGSYGKTGSSPS and GGTTPTIANTPPH.

It belongs to the protein kinase superfamily. Ser/Thr protein kinase family. APG1/unc-51/ULK1 subfamily. As to quaternary structure, homodimer. Forms a ternary complex with ATG13 and ATG17.

The protein localises to the cytoplasm. It is found in the preautophagosomal structure membrane. The enzyme catalyses L-seryl-[protein] + ATP = O-phospho-L-seryl-[protein] + ADP + H(+). It carries out the reaction L-threonyl-[protein] + ATP = O-phospho-L-threonyl-[protein] + ADP + H(+). Its function is as follows. Serine/threonine protein kinase involved in the cytoplasm to vacuole transport (Cvt) and found to be essential in autophagy, where it is required for the formation of autophagosomes. Involved in the clearance of protein aggregates which cannot be efficiently cleared by the proteasome. Required for selective autophagic degradation of the nucleus (nucleophagy) as well as for mitophagy which contributes to regulate mitochondrial quantity and quality by eliminating the mitochondria to a basal level to fulfill cellular energy requirements and preventing excess ROS production. Also involved in endoplasmic reticulum-specific autophagic process, in selective removal of ER-associated degradation (ERAD) substrates. Plays a key role in ATG9 and ATG23 cycling through the pre-autophagosomal structure and is necessary to promote ATG18 binding to ATG9 through phosphorylation of ATG9. Catalyzes phosphorylation of ATG4, decreasing the interaction between ATG4 and ATG8 and impairing deconjugation of PE-conjugated forms of ATG8. This Sclerotinia sclerotiorum (strain ATCC 18683 / 1980 / Ss-1) (White mold) protein is Serine/threonine-protein kinase ATG1.